The chain runs to 132 residues: Agouti-signaling protein (132 aa).

An N-terminal signal peptide occupies residues 1 to 22; that stretch reads MDVTRLLLATLLVFLCFFTVYS. An N-linked (GlcNAc...) asparagine glycan is attached at asparagine 39. The interval 62–88 is disordered; it reads ISRKEAEKKRSSKKEASMKKVAQPRTP. A compositionally biased stretch (basic and acidic residues) spans 63-79; the sequence is SRKEAEKKRSSKKEASM. Disulfide bonds link cysteine 93–cysteine 108, cysteine 100–cysteine 114, cysteine 107–cysteine 125, cysteine 111–cysteine 132, and cysteine 116–cysteine 123. The region spanning 93–132 is the Agouti domain; sequence CVATRYSCKPPAPACCDPCASCQCRFFRSACSCRVLRLNC.

Its subcellular location is the secreted. Functionally, involved in the regulation of melanogenesis. The binding of ASP to MC1R precludes alpha-MSH initiated signaling and thus blocks production of cAMP, leading to a down-regulation of eumelanogenesis (brown/black pigment) and thus increasing synthesis of pheomelanin (yellow/red pigment). This chain is Agouti-signaling protein (ASIP), found in Semnopithecus entellus (Northern plains gray langur).